The following is a 181-amino-acid chain: MVIGLKEKYKTTVTQALKEEFQYENIHEVPRFTKITINRGLGEASQNAKALESSIQELTLITGQKPIVTRAKKSIAGFKIREEVPIGIVVHLRKDKMYSFLEKLINLTLPRIRDFRGISPKSFDGKGNYNLGLREQLIFPEIDYDNIDQIRGLDISIVTTAKTDQEGLALLKKLGMPFRES.

This sequence belongs to the universal ribosomal protein uL5 family. Part of the 50S ribosomal subunit; contacts the 5S rRNA.

The protein localises to the plastid. Its subcellular location is the chloroplast. Binds 5S rRNA, forms part of the central protuberance of the 50S subunit. In Porphyra purpurea (Red seaweed), this protein is Large ribosomal subunit protein uL5c (rpl5).